Here is a 469-residue protein sequence, read N- to C-terminus: Sorting and assembly machinery component 50 homolog (469 aa).

The segment at 1 to 20 is disordered; that stretch reads MGTVHARSLEPLPSSGPDFG. The region spanning 45 to 125 is the POTRA domain; the sequence is VVVQHVHFDG…LDVTFEVTEL (81 aa). N6-methyllysine is present on Lys255.

Belongs to the SAM50/omp85 family. Associates with the mitochondrial contact site and cristae organizing system (MICOS) complex, composed of at least MICOS10/MIC10, CHCHD3/MIC19, CHCHD6/MIC25, APOOL/MIC27, IMMT/MIC60, APOO/MIC23/MIC26 and QIL1/MIC13. This complex was also known under the names MINOS or MitOS complex. The MICOS complex associates with mitochondrial outer membrane proteins SAMM50, MTX1 and MTX2 (together described as components of the mitochondrial outer membrane sorting assembly machinery (SAM) complex) and DNAJC11, mitochondrial inner membrane protein TMEM11 and with HSPA9. The MICOS and SAM complexes together with DNAJC11 are part of a large protein complex spanning both membranes termed the mitochondrial intermembrane space bridging (MIB) complex. Interacts with CHCHD3/MIC19. Interacts with ARMC1. As to quaternary structure, (Microbial infection) Interacts with parasite T.gondii RH strain MAF1b1; the interaction is probably indirect and results in the disruption of the MIB complex and the formation of SPOTs (structures positive for outer mitochondrial membrane (OMM)), a cellular response to OMM stress, which leads to the constitutive shedding of OMM vesicles.

It localises to the mitochondrion outer membrane. It is found in the cytoplasm. The protein resides in the mitochondrion. In terms of biological role, plays a crucial role in the maintenance of the structure of mitochondrial cristae and the proper assembly of the mitochondrial respiratory chain complexes. Required for the assembly of TOMM40 into the TOM complex. This chain is Sorting and assembly machinery component 50 homolog (SAMM50), found in Homo sapiens (Human).